The chain runs to 241 residues: Small ribosomal subunit protein uS2 (241 aa).

This sequence belongs to the universal ribosomal protein uS2 family.

The polypeptide is Small ribosomal subunit protein uS2 (Shigella flexneri serotype 5b (strain 8401)).